The chain runs to 74 residues: Small ribosomal subunit protein uS8c (74 aa).

Belongs to the universal ribosomal protein uS8 family. As to quaternary structure, part of the 30S ribosomal subunit.

Its subcellular location is the plastid. It localises to the chloroplast. One of the primary rRNA binding proteins, it binds directly to 16S rRNA central domain where it helps coordinate assembly of the platform of the 30S subunit. The chain is Small ribosomal subunit protein uS8c (rps8) from Oenothera ammophila (Evening primerose).